The following is a 1071-amino-acid chain: Exportin-1 (1071 aa).

Residues A46–K112 enclose the Importin N-terminal domain. HEAT repeat units lie at residues Q217–Y240, I241–S277, M354–T472, R515–R553, K560–R597, and V602–Y639. Residues C327–S450 are necessary for interaction with Ran and nuclear export complex formation. Position 391 is a phosphoserine (S391). The interval T411–Q481 is necessary for interaction with RANBP3. The residue at position 446 (K446) is an N6-acetyllysine. T448 is modified (phosphothreonine). Phosphoserine is present on S450. Y454 is modified (phosphotyrosine). K693 is modified (N6-acetyllysine). 3 HEAT repeats span residues N775–G813, T885–Q916, and T917–E954. Phosphoserine is present on residues S966 and S1031. An HEAT 10 repeat occupies F1002–E1039.

It belongs to the exportin family. Found in a U snRNA export complex with PHAX/RNUXA, NCBP1/CBP80, NCBP2/CBP20, RAN, XPO1 and m7G-capped RNA. Component of a nuclear export receptor complex composed of KPNB1, RAN, SNUPN and XPO1. Found in a trimeric export complex with SNUPN, RAN and XPO1. Found in a nuclear export complex with RANBP3 and RAN. Found in a 60S ribosomal subunit export complex with NMD3, RAN, XPO1. Interacts with DDX3X, NMD3, NUP42, NUP88, NUP214, RANBP3 and TERT. Interacts with NEMF (via its N-terminus). Interacts with the monomeric form of BIRC5/survivin deacetylated at 'Lys-129'. Interacts with DTNBP1 and SERTAD2; the interactions translocate DTNBP1 and SERTAD2 out of the nucleus. Interacts with ATF2. Interacts with SLC35G1 and STIM1. Interacts with DCAF8. Interacts with CPEB3. Interacts with HAX1. Interacts with BOK; translocates to the cytoplasm. Interacts with HSP90AB1. Interacts with LRPPRC; interacts with LRPPRC alone and also when LRPPRC is in complex with EIF4E and with EIF4E sensitivity element (4ESE)-containing mRNAs to form an EIF4E-dependent mRNA export complex.

It is found in the cytoplasm. The protein resides in the nucleus. The protein localises to the nucleoplasm. It localises to the cajal body. Its subcellular location is the nucleolus. Mediates the nuclear export of cellular proteins (cargos) bearing a leucine-rich nuclear export signal (NES) and of RNAs. In the nucleus, in association with RANBP3, binds cooperatively to the NES on its target protein and to the GTPase Ran in its active GTP-bound form. Docking of this complex to the nuclear pore complex (NPC) is mediated through binding to nucleoporins. Upon transit of a nuclear export complex into the cytoplasm, disassembling of the complex and hydrolysis of Ran-GTP to Ran-GDP (induced by RANBP1 and RANGAP1, respectively) cause release of the cargo from the export receptor. The directionality of nuclear export is thought to be conferred by an asymmetric distribution of the GTP- and GDP-bound forms of Ran between the cytoplasm and nucleus. Involved in U3 snoRNA transport from Cajal bodies to nucleoli. Binds to late precursor U3 snoRNA bearing a TMG cap. This is Exportin-1 (Xpo1) from Rattus norvegicus (Rat).